Here is a 327-residue protein sequence, read N- to C-terminus: Protein MRG2 (327 aa).

The segment at 1–40 (MGSPNAAAETDLTTDDFIGDTRRDSGSDTETNTDCDGEDL) is disordered. Positions 52 to 101 (FEEGERVLAKHSDCFYEAKVLKVEFKDNEWKYFVHYIGWNKSWDEWIRLD) constitute a Tudor-knot domain. The interval 133-156 (SKMKPRSPNVARGRKRKQDSVDTE) is disordered. The MRG domain maps to 162 to 327 (SDNLLSFNIP…AVEEMEKKEG (166 aa)).

In terms of assembly, interacts with HAM1 and HAM2. Interacts (via MRG domain) with CO. Component of the NuA4 histone acetyltransferase complex. Ubiquitous. Mainly expressed in the vasculature of cotyledons and leaves, and in roots and inflorescences.

It is found in the nucleus. In terms of biological role, chromatin remodeling factor. Acts as a 'reader' protein by binding to H3K4me3 and H3K36me3 to control histone H4 acetylation. Increases the transcriptional levels of the flowering time genes FLC and FT. Binds the chromatin at the FT promoter upon interaction with CO. The protein is Protein MRG2 of Arabidopsis thaliana (Mouse-ear cress).